The following is a 59-amino-acid chain: Single-pass membrane and coiled-coil domain-containing protein 4 (59 aa).

Residues 1 to 27 (MRQLKGKPKKETSRDKKERKQAMQEAR) form a disordered region. Residues 9–27 (KKETSRDKKERKQAMQEAR) are compositionally biased toward basic and acidic residues. Positions 9–31 (KKETSRDKKERKQAMQEARRQIT) form a coiled coil. The chain crosses the membrane as a helical span at residues 32 to 52 (TVVLPTLAVVVLLIVVFVYVA).

It belongs to the SMCO4 family.

The protein resides in the membrane. This Bos taurus (Bovine) protein is Single-pass membrane and coiled-coil domain-containing protein 4 (SMCO4).